The primary structure comprises 237 residues: tRNA1(Val) (adenine(37)-N6)-methyltransferase (237 aa).

This sequence belongs to the methyltransferase superfamily. tRNA (adenine-N(6)-)-methyltransferase family.

It localises to the cytoplasm. The enzyme catalyses adenosine(37) in tRNA1(Val) + S-adenosyl-L-methionine = N(6)-methyladenosine(37) in tRNA1(Val) + S-adenosyl-L-homocysteine + H(+). Its function is as follows. Specifically methylates the adenine in position 37 of tRNA(1)(Val) (anticodon cmo5UAC). This chain is tRNA1(Val) (adenine(37)-N6)-methyltransferase, found in Tolumonas auensis (strain DSM 9187 / NBRC 110442 / TA 4).